A 115-amino-acid polypeptide reads, in one-letter code: Beta-2-microglobulin (115 aa).

The first 18 residues, 1-18 (MGLLICSLLLGLLCCSMA), serve as a signal peptide directing secretion. One can recognise an Ig-like C1-type domain in the interval 23–114 (PKVEVYTREP…KSKDHFLMIG (92 aa)).

It belongs to the beta-2-microglobulin family. Heterodimer of an alpha chain and a beta chain. Beta-2-microglobulin is the beta-chain of major histocompatibility complex class I molecules.

Its subcellular location is the secreted. Functionally, component of the class I major histocompatibility complex (MHC). Involved in the presentation of peptide antigens to the immune system. This chain is Beta-2-microglobulin (b2m), found in Paralichthys olivaceus (Bastard halibut).